The chain runs to 146 residues: Large ribosomal subunit protein uL14 (146 aa).

This sequence belongs to the universal ribosomal protein uL14 family.

The protein is Large ribosomal subunit protein uL14 (RPL23) of Encephalitozoon cuniculi (strain GB-M1) (Microsporidian parasite).